We begin with the raw amino-acid sequence, 734 residues long: Photosystem I P700 chlorophyll a apoprotein A2 (734 aa).

The next 8 helical transmembrane spans lie at 46–69 (IFAS…FHVA), 135–158 (LYTG…LHLQ), 175–199 (LNHH…HVAI), 273–291 (IAHH…GHMY), 330–353 (LHFQ…QHMY), 369–395 (AALY…IFFI), 417–439 (AIIS…LYVH), and 517–535 (FLVH…LILV). Residues cysteine 559 and cysteine 568 each coordinate [4Fe-4S] cluster. The next 2 membrane-spanning stretches (helical) occupy residues 575-596 (AFYL…YWHW) and 643-665 (LSVW…MFLI). 3 residues coordinate chlorophyll a: histidine 654, methionine 662, and tyrosine 670. Tryptophan 671 provides a ligand contact to phylloquinone. The helical transmembrane segment at 707 to 727 (LVGLAHFSVGYIFTYAAFLIA) threads the bilayer.

This sequence belongs to the PsaA/PsaB family. As to quaternary structure, the PsaA/B heterodimer binds the P700 chlorophyll special pair and subsequent electron acceptors. PSI consists of a core antenna complex that captures photons, and an electron transfer chain that converts photonic excitation into a charge separation. The eukaryotic PSI reaction center is composed of at least 11 subunits. P700 is a chlorophyll a/chlorophyll a' dimer, A0 is one or more chlorophyll a, A1 is one or both phylloquinones and FX is a shared 4Fe-4S iron-sulfur center. serves as cofactor.

It is found in the plastid. Its subcellular location is the chloroplast thylakoid membrane. The enzyme catalyses reduced [plastocyanin] + hnu + oxidized [2Fe-2S]-[ferredoxin] = oxidized [plastocyanin] + reduced [2Fe-2S]-[ferredoxin]. Its function is as follows. PsaA and PsaB bind P700, the primary electron donor of photosystem I (PSI), as well as the electron acceptors A0, A1 and FX. PSI is a plastocyanin-ferredoxin oxidoreductase, converting photonic excitation into a charge separation, which transfers an electron from the donor P700 chlorophyll pair to the spectroscopically characterized acceptors A0, A1, FX, FA and FB in turn. Oxidized P700 is reduced on the lumenal side of the thylakoid membrane by plastocyanin. The chain is Photosystem I P700 chlorophyll a apoprotein A2 from Zygnema circumcarinatum (Green alga).